The sequence spans 919 residues: 2-oxoadipate dehydrogenase complex component E1 (919 aa).

Lysine 183 and lysine 188 each carry N6-succinyllysine. Residues 299-320 (GKTRGRQQSRQDGDYSPDNSAQ) are disordered. Lysine 800 and lysine 818 each carry N6-succinyllysine.

It belongs to the alpha-ketoglutarate dehydrogenase family. The 2-oxoadipate dehydrogenase complex is composed of OADH (2-oxoadipate dehydrogenase; E1a), DLST (dihydrolipoamide succinyltransferase; E2) and DLD (dihydrolipoamide dehydrogenase; E3). E1a functional unit is a dimer. Interacts with DLST. Requires thiamine diphosphate as cofactor.

The protein resides in the mitochondrion. It carries out the reaction N(6)-[(R)-lipoyl]-L-lysyl-[protein] + 2-oxoadipate + H(+) = N(6)-[(R)-S(8)-glutaryldihydrolipoyl]-L-lysyl-[protein] + CO2. Its pathway is amino-acid degradation. Its function is as follows. 2-oxoadipate dehydrogenase (E1a) component of the 2-oxoadipate dehydrogenase complex (OADHC). Participates in the first step, rate limiting for the overall conversion of 2-oxoadipate (alpha-ketoadipate) to glutaryl-CoA and CO(2) catalyzed by the whole OADHC. Catalyzes the irreversible decarboxylation of 2-oxoadipate via the thiamine diphosphate (ThDP) cofactor and subsequent transfer of the decarboxylated acyl intermediate on an oxidized dihydrolipoyl group that is covalently amidated to the E2 enzyme (dihydrolipoyllysine-residue succinyltransferase or DLST). Can catalyze the decarboxylation of 2-oxoglutarate in vitro, but at a much lower rate than 2-oxoadipate. Responsible for the last step of L-lysine, L-hydroxylysine and L-tryptophan catabolism with the common product being 2-oxoadipate. The protein is 2-oxoadipate dehydrogenase complex component E1 (DHTKD1) of Homo sapiens (Human).